The chain runs to 38 residues: MKVRSSVKKRCEHCQVIKRHGRVLIICKANPKHNQKQG.

It belongs to the bacterial ribosomal protein bL36 family.

The protein is Large ribosomal subunit protein bL36 of Pseudothermotoga lettingae (strain ATCC BAA-301 / DSM 14385 / NBRC 107922 / TMO) (Thermotoga lettingae).